Consider the following 106-residue polypeptide: UPF0145 protein FTL_1249 (106 aa).

The protein belongs to the UPF0145 family.

The polypeptide is UPF0145 protein FTL_1249 (Francisella tularensis subsp. holarctica (strain LVS)).